The chain runs to 37 residues: Glucagon-1 (37 aa).

This sequence belongs to the glucagon family.

The protein resides in the secreted. In terms of biological role, glucagon plays a key role in glucose metabolism and homeostasis. Regulates blood glucose by increasing gluconeogenesis and decreasing glycolysis. The polypeptide is Glucagon-1 (Huso dauricus (Kaluga sturgeon)).